The primary structure comprises 432 residues: Enolase (432 aa).

Residue Gln-166 coordinates (2R)-2-phosphoglycerate. Glu-208 (proton donor) is an active-site residue. 3 residues coordinate Mg(2+): Asp-245, Glu-291, and Asp-318. The (2R)-2-phosphoglycerate site is built by Lys-343, Arg-372, Ser-373, and Lys-394. Residue Lys-343 is the Proton acceptor of the active site.

The protein belongs to the enolase family. Mg(2+) is required as a cofactor.

It localises to the cytoplasm. It is found in the secreted. The protein localises to the cell surface. It catalyses the reaction (2R)-2-phosphoglycerate = phosphoenolpyruvate + H2O. The protein operates within carbohydrate degradation; glycolysis; pyruvate from D-glyceraldehyde 3-phosphate: step 4/5. Catalyzes the reversible conversion of 2-phosphoglycerate (2-PG) into phosphoenolpyruvate (PEP). It is essential for the degradation of carbohydrates via glycolysis. This chain is Enolase, found in Leptospira interrogans serogroup Icterohaemorrhagiae serovar copenhageni (strain Fiocruz L1-130).